Reading from the N-terminus, the 209-residue chain is Glutathione S-transferase 1, isoform D (209 aa).

The 80-residue stretch at 1 to 80 (MDFYYLPGSA…YLAEKYGKDD (80 aa)) folds into the GST N-terminal domain. Residues serine 9, 50–52 (HCI), and 64–66 (ESR) contribute to the glutathione site. A GST C-terminal domain is found at 86–207 (DPQKRAVVNQ…AGADEFKAKF (122 aa)).

The protein belongs to the GST superfamily. Theta family. Homodimer.

It catalyses the reaction RX + glutathione = an S-substituted glutathione + a halide anion + H(+). The enzyme catalyses 1,1,1-trichloro-2,2-bis(4-chlorophenyl)ethane = 1,1-dichloro-2,2-bis(4-chlorophenyl)ethylene + chloride + H(+). With respect to regulation, inhibited by S-hexylglutathione. Conjugation of reduced glutathione to a wide number of exogenous and endogenous hydrophobic electrophiles. Has DDT dehydrochlorinase activity. This is Glutathione S-transferase 1, isoform D (GstD1) from Anopheles gambiae (African malaria mosquito).